The following is a 279-amino-acid chain: NADPH-dependent 7-cyano-7-deazaguanine reductase (279 aa).

86 to 88 (IES) contributes to the substrate binding site. An NADPH-binding site is contributed by 88-89 (SK). C187 acts as the Thioimide intermediate in catalysis. The active-site Proton donor is D194. 226-227 (HE) is a binding site for substrate. Position 255–256 (255–256 (RG)) interacts with NADPH.

Belongs to the GTP cyclohydrolase I family. QueF type 2 subfamily. As to quaternary structure, homodimer.

The protein resides in the cytoplasm. The catalysed reaction is 7-aminomethyl-7-carbaguanine + 2 NADP(+) = 7-cyano-7-deazaguanine + 2 NADPH + 3 H(+). It functions in the pathway tRNA modification; tRNA-queuosine biosynthesis. In terms of biological role, catalyzes the NADPH-dependent reduction of 7-cyano-7-deazaguanine (preQ0) to 7-aminomethyl-7-deazaguanine (preQ1). The polypeptide is NADPH-dependent 7-cyano-7-deazaguanine reductase (Haemophilus influenzae (strain ATCC 51907 / DSM 11121 / KW20 / Rd)).